A 273-amino-acid chain; its full sequence is Ribosomal RNA small subunit methyltransferase A (273 aa).

S-adenosyl-L-methionine contacts are provided by N18, L20, G45, E66, D91, and N113.

Belongs to the class I-like SAM-binding methyltransferase superfamily. rRNA adenine N(6)-methyltransferase family. RsmA subfamily.

The protein localises to the cytoplasm. The catalysed reaction is adenosine(1518)/adenosine(1519) in 16S rRNA + 4 S-adenosyl-L-methionine = N(6)-dimethyladenosine(1518)/N(6)-dimethyladenosine(1519) in 16S rRNA + 4 S-adenosyl-L-homocysteine + 4 H(+). In terms of biological role, specifically dimethylates two adjacent adenosines (A1518 and A1519) in the loop of a conserved hairpin near the 3'-end of 16S rRNA in the 30S particle. May play a critical role in biogenesis of 30S subunits. This Escherichia fergusonii (strain ATCC 35469 / DSM 13698 / CCUG 18766 / IAM 14443 / JCM 21226 / LMG 7866 / NBRC 102419 / NCTC 12128 / CDC 0568-73) protein is Ribosomal RNA small subunit methyltransferase A.